Reading from the N-terminus, the 416-residue chain is Lactose permease (416 aa).

The Cytoplasmic segment spans residues Met-1–Asn-13. The helical transmembrane segment at Phe-14–Phe-34 threads the bilayer. The Periplasmic portion of the chain corresponds to Phe-35–Thr-50. Residues Gly-51 to Ile-71 form a helical membrane-spanning segment. At Ser-72–His-80 the chain is on the cytoplasmic side. Residues Leu-81–Ser-101 form a helical membrane-spanning segment. Pro-102 is a topological domain (periplasmic). A helical transmembrane segment spans residues Leu-103–Phe-123. At Ser-124 to Arg-149 the chain is on the cytoplasmic side. 2 helical membrane passes run Val-150–Asp-170 and Pro-171–Val-191. At Ser-192–Arg-223 the chain is on the cytoplasmic side. The chain crosses the membrane as a helical span at residues Met-224 to Phe-244. Residues Asp-245 to Gly-267 are Periplasmic-facing. Residues Phe-268–Ile-288 traverse the membrane as a helical segment. Topologically, residues Asn-289–Asn-295 are cytoplasmic. A run of 2 helical transmembrane segments spans residues Ala-296 to Ser-316 and Ala-317 to Gly-337. Residues Thr-338–Thr-353 are Cytoplasmic-facing. The chain crosses the membrane as a helical span at residues Leu-354–Val-374. The Periplasmic portion of the chain corresponds to Gly-375 to His-384. The helical transmembrane segment at Gln-385 to Leu-405 threads the bilayer. Residues Lys-406–Ala-416 lie on the Cytoplasmic side of the membrane.

Belongs to the major facilitator superfamily. Oligosaccharide:H(+) symporter (OHS) (TC 2.A.1.5) family.

It localises to the cell inner membrane. The enzyme catalyses lactose(in) + H(+)(in) = lactose(out) + H(+)(out). Responsible for transport of beta-galactosides into the cell, with the concomitant import of a proton (symport system). The chain is Lactose permease (lacY) from Klebsiella oxytoca.